A 306-amino-acid polypeptide reads, in one-letter code: Glutamyl-Q tRNA(Asp) synthetase (306 aa).

L-glutamate is bound by residues 29–33 (RFAPS) and D65. The short motif at 32–42 (PSPTGPLHLGN) is the 'HIGH' region element. Positions 121, 123, 141, and 145 each coordinate Zn(2+). L-glutamate contacts are provided by Y188 and R206. Residues 244–248 (KLAKR) carry the 'KMSKS' region motif. Position 247 (K247) interacts with ATP.

It belongs to the class-I aminoacyl-tRNA synthetase family. GluQ subfamily. It depends on Zn(2+) as a cofactor.

Functionally, catalyzes the tRNA-independent activation of glutamate in presence of ATP and the subsequent transfer of glutamate onto a tRNA(Asp). Glutamate is transferred on the 2-amino-5-(4,5-dihydroxy-2-cyclopenten-1-yl) moiety of the queuosine in the wobble position of the QUC anticodon. In Prochlorococcus marinus (strain MIT 9313), this protein is Glutamyl-Q tRNA(Asp) synthetase.